A 288-amino-acid polypeptide reads, in one-letter code: MSNPESLKKQVEPPGYNELFMVEDVCNVDLEQGLDLCKPEKVNKQSQRSRQSRQSLFTNTIKPQKDKMNIKTNKIKEFLNDLFTEFSKFHNSYYPNGRISTQDKSRWVLLIIWSIITILTIDKKFKIKESYLEWIGENQSHSEIWGPIVIYVGLFILLLSAFNYCSKLIIKALPLISMVIAWVGVVIAAFSVIITATIAGVIAAFSVIITATIAGVIAAMVGILYFGHWLVYKILILAFGFKIVTSGDVCVSNTLPTHNGETALHSDATVGSDIEQIELQNMPTPVKK.

Helical transmembrane passes span 107–127 (WVLL…KFKI), 144–164 (IWGP…AFNY), 174–194 (PLIS…SVII), and 198–218 (IAGV…GVIA).

It belongs to the UPF0494 family.

The protein resides in the cytoplasm. Its subcellular location is the endoplasmic reticulum. It is found in the membrane. This chain is UPF0494 membrane protein C212.04c, found in Schizosaccharomyces pombe (strain 972 / ATCC 24843) (Fission yeast).